Reading from the N-terminus, the 113-residue chain is Large ribosomal subunit protein bL19 (113 aa).

This sequence belongs to the bacterial ribosomal protein bL19 family.

Its function is as follows. This protein is located at the 30S-50S ribosomal subunit interface and may play a role in the structure and function of the aminoacyl-tRNA binding site. In Corynebacterium jeikeium (strain K411), this protein is Large ribosomal subunit protein bL19.